The sequence spans 135 residues: Large ribosomal subunit protein uL16c (135 aa).

The protein belongs to the universal ribosomal protein uL16 family. As to quaternary structure, part of the 50S ribosomal subunit.

Its subcellular location is the plastid. The protein localises to the chloroplast. The chain is Large ribosomal subunit protein uL16c from Lotus japonicus (Lotus corniculatus var. japonicus).